A 309-amino-acid chain; its full sequence is uncharacterized protein (309 aa).

Pro residues-rich tracts occupy residues 1–17 and 24–51; these read MTSRAPSPPTPPCPSPP and SPVPTATPASPPLKPLSNPLPPPPPTPR. Disordered regions lie at residues 1-174 and 216-240; these read MTSR…PPGV and PPDLPSPPLSPPLSPPLSPISPLHA. The span at 67–83 shows a compositional bias: low complexity; it reads LRSSPSSALNASRGAPS. Over residues 84–112 the composition is skewed to pro residues; it reads TSPPPSSSPPSSPASTPPSRTPSPTPTAP. Composition is skewed to low complexity over residues 113–125 and 135–144; these read ASPVASTAMTPAS and APSSSAALSS. The segment covering 160–174 has biased composition (pro residues); the sequence is PPPPLPPPLQPPPGV. The helical transmembrane segment at 278-298 threads the bilayer; sequence LFLLFTLLSIHFSPFPIFILL.

The protein resides in the host membrane. This is an uncharacterized protein from Vitis vinifera (Grape).